We begin with the raw amino-acid sequence, 94 residues long: Cell division topological specificity factor (94 aa).

Belongs to the MinE family.

In terms of biological role, prevents the cell division inhibition by proteins MinC and MinD at internal division sites while permitting inhibition at polar sites. This ensures cell division at the proper site by restricting the formation of a division septum at the midpoint of the long axis of the cell. The polypeptide is Cell division topological specificity factor (Beijerinckia indica subsp. indica (strain ATCC 9039 / DSM 1715 / NCIMB 8712)).